Consider the following 260-residue polypeptide: 5'-nucleotidase SurE (260 aa).

A divalent metal cation is bound by residues D19, D20, S51, and N104.

It belongs to the SurE nucleotidase family. It depends on a divalent metal cation as a cofactor.

It is found in the cytoplasm. It catalyses the reaction a ribonucleoside 5'-phosphate + H2O = a ribonucleoside + phosphate. Its function is as follows. Nucleotidase that shows phosphatase activity on nucleoside 5'-monophosphates. The protein is 5'-nucleotidase SurE of Paramagnetospirillum magneticum (strain ATCC 700264 / AMB-1) (Magnetospirillum magneticum).